Consider the following 770-residue polypeptide: NAD-dependent malic enzyme (770 aa).

Positions 1 to 440 are malic enzyme; it reads MNTGDKAKSQ…KLNRFVFRSG (440 aa). K107 functions as the Proton acceptor in the catalytic mechanism. Residues E149 and D150 each coordinate a divalent metal cation. The NAD(+) site is built by D175 and N300. Positions 441–770 are phosphate acetyltransferase; the sequence is FIMKPVFAAA…LAVVESSHPV (330 aa).

It in the N-terminal section; belongs to the malic enzymes family. In the C-terminal section; belongs to the phosphate acetyltransferase and butyryltransferase family. In terms of assembly, homooctamer. Requires Mg(2+) as cofactor. Mn(2+) serves as cofactor.

The enzyme catalyses (S)-malate + NAD(+) = pyruvate + CO2 + NADH. With respect to regulation, subject to substrate inhibition and shows allosteric regulation by acetyl-CoA. Required for symbiotic nitrogen fixation. Plays a key role in the conversion of malate to acetyl-CoA for efficient tricarboxylic acid cycle function in nitrogen-fixating bacteria. The protein is NAD-dependent malic enzyme (dme) of Rhizobium meliloti (strain 1021) (Ensifer meliloti).